A 273-amino-acid chain; its full sequence is Zinc finger protein 80 (273 aa).

7 C2H2-type zinc fingers span residues tyrosine 49–histidine 71, tyrosine 77–histidine 99, lysine 103–histidine 127, tyrosine 133–histidine 155, phenylalanine 161–histidine 183, tyrosine 189–histidine 211, and tyrosine 217–histidine 239.

This sequence belongs to the krueppel C2H2-type zinc-finger protein family.

Its subcellular location is the nucleus. In terms of biological role, may be involved in transcriptional regulation. The chain is Zinc finger protein 80 (ZNF80) from Pongo pygmaeus (Bornean orangutan).